A 123-amino-acid polypeptide reads, in one-letter code: Holo-[acyl-carrier-protein] synthase (123 aa).

The Mg(2+) site is built by D8 and E56.

Belongs to the P-Pant transferase superfamily. AcpS family. Mg(2+) is required as a cofactor.

Its subcellular location is the cytoplasm. The catalysed reaction is apo-[ACP] + CoA = holo-[ACP] + adenosine 3',5'-bisphosphate + H(+). Transfers the 4'-phosphopantetheine moiety from coenzyme A to a Ser of acyl-carrier-protein. This Clostridium botulinum (strain Eklund 17B / Type B) protein is Holo-[acyl-carrier-protein] synthase.